We begin with the raw amino-acid sequence, 626 residues long: DNA (cytosine-5)-methyltransferase DRM2 (626 aa).

UBA domains lie at 59 to 101 (GFSD…ISKY) and 109 to 150 (SSKS…LLSC). Acidic residues predominate over residues 160-187 (VEEEDGIDWSSSDDDTNYTDMLNSDDEK). Disordered regions lie at residues 160-196 (VEEEDGIDWSSSDDDTNYTDMLNSDDEKDPNSNENGS) and 245-282 (TEHEEQKPRHNIKKRRFESKGEPRSSVDDEPIRLPNPM). The 43-residue stretch at 190–232 (NSNENGSKIRSLVKMGFSELEASLAVERCGENVDIAELTDFLC) folds into the UBA 3 domain. Positions 262-276 (ESKGEPRSSVDDEPI) are enriched in basic and acidic residues. One can recognise an SAM-dependent MTase DRM-type domain in the interval 295 to 626 (THRSLPELAR…EVVRARMRGS (332 aa)).

The protein belongs to the class I-like SAM-binding methyltransferase superfamily. DRM-methyltransferase family. As to quaternary structure, interacts with RDM1. In terms of tissue distribution, expressed in roots, inflorescences and at lower levels in leaves.

The protein resides in the nucleus. It localises to the nucleoplasm. It carries out the reaction a 2'-deoxycytidine in DNA + S-adenosyl-L-methionine = a 5-methyl-2'-deoxycytidine in DNA + S-adenosyl-L-homocysteine + H(+). Functionally, involved in de novo DNA methylation. Controls asymmetric and CpNpG methylation. Required for FWA gene silencing but not for the maintenance of SUP gene silencing. Functionally redundant to CMT3 to maintain non-CpG methylation. Involved in RNA-directed DNA methylation (RdDM). Acts as major DNA methyltransferase in the RdDM pathway, and is essential for RNA-directed de novo DNA methylation of cytosines in all sequence contexts. Associates with long non-coding RNA (lncRNA) produced by RNA polymerase V (Pol V). This association is dependent on AGO4 and IDN2, and results in DNA methylation of RdDM target loci. This chain is DNA (cytosine-5)-methyltransferase DRM2 (DRM2), found in Arabidopsis thaliana (Mouse-ear cress).